The following is a 244-amino-acid chain: rRNA adenine N-6-methyltransferase (244 aa).

S-adenosyl-L-methionine contacts are provided by asparagine 11, isoleucine 13, glycine 38, glutamate 59, aspartate 84, and asparagine 101.

The protein belongs to the class I-like SAM-binding methyltransferase superfamily. rRNA adenine N(6)-methyltransferase family.

The catalysed reaction is adenosine(2085) in 23S rRNA + 2 S-adenosyl-L-methionine = N(6)-dimethyladenosine(2085) in 23S rRNA + 2 S-adenosyl-L-homocysteine + 2 H(+). This protein produces a dimethylation of the adenine residue at position 2085 in 23S rRNA, resulting in reduced affinity between ribosomes and macrolide-lincosamide-streptogramin B antibiotics. Is involved in erythromycin resistance. The chain is rRNA adenine N-6-methyltransferase (ermGT) from Limosilactobacillus reuteri (Lactobacillus reuteri).